We begin with the raw amino-acid sequence, 286 residues long: Beta-lactamase SHV-46 (286 aa).

A signal peptide spans 1-21 (MRYIRLCIISLLATLPLAVHA). The active-site Acyl-ester intermediate is the serine 66. A disulfide bond links cysteine 73 and cysteine 119. Glutamate 164 functions as the Proton acceptor in the catalytic mechanism. Residue 230 to 232 (KTG) participates in substrate binding.

The protein belongs to the class-A beta-lactamase family.

It catalyses the reaction a beta-lactam + H2O = a substituted beta-amino acid. The chain is Beta-lactamase SHV-46 (bla) from Klebsiella oxytoca.